The following is a 266-amino-acid chain: Ribosomal RNA small subunit methyltransferase A (266 aa).

S-adenosyl-L-methionine-binding residues include asparagine 10, isoleucine 12, glycine 37, glutamate 58, aspartate 82, and asparagine 105.

This sequence belongs to the class I-like SAM-binding methyltransferase superfamily. rRNA adenine N(6)-methyltransferase family. RsmA subfamily.

The protein localises to the cytoplasm. The enzyme catalyses adenosine(1518)/adenosine(1519) in 16S rRNA + 4 S-adenosyl-L-methionine = N(6)-dimethyladenosine(1518)/N(6)-dimethyladenosine(1519) in 16S rRNA + 4 S-adenosyl-L-homocysteine + 4 H(+). In terms of biological role, specifically dimethylates two adjacent adenosines (A1518 and A1519) in the loop of a conserved hairpin near the 3'-end of 16S rRNA in the 30S particle. May play a critical role in biogenesis of 30S subunits. This Mycoplasma capricolum subsp. capricolum (strain California kid / ATCC 27343 / NCTC 10154) protein is Ribosomal RNA small subunit methyltransferase A.